The following is a 341-amino-acid chain: Methionine import ATP-binding protein MetN 1 (341 aa).

In terms of domain architecture, ABC transporter spans 2–241 (IEFKNVNKVF…PQTNTAKNFV (240 aa)). Position 38 to 45 (38 to 45 (GYSGAGKS)) interacts with ATP.

Belongs to the ABC transporter superfamily. Methionine importer (TC 3.A.1.24) family. In terms of assembly, the complex is composed of two ATP-binding proteins (MetN), two transmembrane proteins (MetI) and a solute-binding protein (MetQ).

Its subcellular location is the cell membrane. It carries out the reaction L-methionine(out) + ATP + H2O = L-methionine(in) + ADP + phosphate + H(+). The catalysed reaction is D-methionine(out) + ATP + H2O = D-methionine(in) + ADP + phosphate + H(+). In terms of biological role, part of the ABC transporter complex MetNIQ involved in methionine import. Responsible for energy coupling to the transport system. The chain is Methionine import ATP-binding protein MetN 1 from Staphylococcus epidermidis (strain ATCC 35984 / DSM 28319 / BCRC 17069 / CCUG 31568 / BM 3577 / RP62A).